The following is a 332-amino-acid chain: Autoinducer 2 import system permease protein LsrD (332 aa).

7 helical membrane-spanning segments follow: residues 5–25 (LNWE…FGAL), 43–63 (ICIG…GIDI), 83–103 (GWPL…CGLF), 116–136 (LVIT…LSGM), 160–180 (LGGL…FWLL), 210–230 (IPYV…LVMV), and 259–279 (IYGG…VGYL).

The protein belongs to the binding-protein-dependent transport system permease family. AraH/RbsC subfamily. In terms of assembly, the complex is composed of two ATP-binding proteins (LsrA), two transmembrane proteins (LsrC and LsrD) and a solute-binding protein (LsrB).

The protein localises to the cell inner membrane. Functionally, part of the ABC transporter complex LsrABCD involved in autoinducer 2 (AI-2) import. Probably responsible for the translocation of the substrate across the membrane. This Klebsiella pneumoniae subsp. pneumoniae (strain ATCC 700721 / MGH 78578) protein is Autoinducer 2 import system permease protein LsrD (lsrD).